The primary structure comprises 95 residues: Co-chaperonin GroES (95 aa).

Belongs to the GroES chaperonin family. Heptamer of 7 subunits arranged in a ring. Interacts with the chaperonin GroEL.

It is found in the cytoplasm. Functionally, together with the chaperonin GroEL, plays an essential role in assisting protein folding. The GroEL-GroES system forms a nano-cage that allows encapsulation of the non-native substrate proteins and provides a physical environment optimized to promote and accelerate protein folding. GroES binds to the apical surface of the GroEL ring, thereby capping the opening of the GroEL channel. This Rickettsia felis (strain ATCC VR-1525 / URRWXCal2) (Rickettsia azadi) protein is Co-chaperonin GroES.